The following is a 178-amino-acid chain: Interleukin-10 (178 aa).

The signal sequence occupies residues 1–18; that stretch reads MHSSALLCCLVLLTGVRA. 2 disulfide bridges follow: Cys-30-Cys-126 and Cys-80-Cys-132. Asn-134 carries an N-linked (GlcNAc...) asparagine glycan.

It belongs to the IL-10 family. In terms of assembly, homodimer. Interacts with IL10RA and IL10RB.

It is found in the secreted. In terms of biological role, major immune regulatory cytokine that acts on many cells of the immune system where it has profound anti-inflammatory functions, limiting excessive tissue disruption caused by inflammation. Mechanistically, IL10 binds to its heterotetrameric receptor comprising IL10RA and IL10RB leading to JAK1 and STAT2-mediated phosphorylation of STAT3. In turn, STAT3 translocates to the nucleus where it drives expression of anti-inflammatory mediators. Targets antigen-presenting cells (APCs) such as macrophages and monocytes and inhibits their release of pro-inflammatory cytokines including granulocyte-macrophage colony-stimulating factor /GM-CSF, granulocyte colony-stimulating factor/G-CSF, IL-1 alpha, IL-1 beta, IL-6, IL-8 and TNF-alpha. Also interferes with antigen presentation by reducing the expression of MHC-class II and co-stimulatory molecules, thereby inhibiting their ability to induce T cell activation. In addition, controls the inflammatory response of macrophages by reprogramming essential metabolic pathways including mTOR signaling. The polypeptide is Interleukin-10 (IL10) (Macaca fascicularis (Crab-eating macaque)).